A 133-amino-acid chain; its full sequence is Vascular endothelial growth factor homolog (133 aa).

An N-terminal signal peptide occupies residues 1 to 20 (MKLLVGILVAVCLHQYLLNA). 3 disulfide bridges follow: C36-C78, C67-C112, and C71-C114. A glycan (N-linked (GlcNAc...) asparagine; by host) is linked at N85.

This sequence belongs to the PDGF/VEGF growth factor family. Homodimer; disulfide-linked.

It localises to the secreted. Functionally, induces endothelial proliferation. This Orf virus (strain NZ2) (OV NZ-2) protein is Vascular endothelial growth factor homolog.